A 52-amino-acid chain; its full sequence is Proteinase inhibitor PSI-1.2 (52 aa).

4 disulfides stabilise this stretch: C3/C32, C7/C28, C16/C38, and C31/C49.

Its function is as follows. Potent inhibitor of trypsin and a weaker inhibitor of chymotrypsin. It does not inhibit elastase and subtilisin DY. This chain is Proteinase inhibitor PSI-1.2, found in Capsicum annuum (Capsicum pepper).